The sequence spans 211 residues: Troponin I, cardiac muscle (211 aa).

The disordered stretch occupies residues 1–25 (MADESSDAAGEPQPAPAPVRRRSSA). Position 2 is an N-acetylalanine (Ala2). 2 positions are modified to phosphoserine: Ser5 and Ser6. Ser23 and Ser24 each carry phosphoserine; by PKA and PKD/PRKD1. Phosphotyrosine is present on Tyr27. Phosphothreonine; by STK4/MST1 is present on Thr32. Residues 33 to 80 (EPHAKKKSKISASRKLQLKTLMLQIAKQEMEREAEERRGEKGRVLSTR) are involved in binding TNC. Ser43 and Ser45 each carry phosphoserine; by PKC/PRKCE. Position 52 is a phosphothreonine; by STK4/MST1 (Thr52). Ser78 bears the Phosphoserine mark. Thr79 carries the post-translational modification Phosphothreonine. 2 positions are modified to phosphothreonine; by STK4/MST1: Thr130 and Thr144. An involved in binding TNC and actin region spans residues 130 to 151 (TQKIYDLRGKFKRPTLRRVRIS). Phosphoserine; by PAK3 is present on Ser151. A phosphoserine mark is found at Ser167 and Ser200.

This sequence belongs to the troponin I family. As to quaternary structure, interacts with TRIM63. Binds to actin and tropomyosin. Interacts with STK4/MST1. Phosphorylated at Ser-23 and Ser-24 by PRKD1; phosphorylation reduces myofilament calcium sensitivity. Phosphorylated preferentially at Thr-32. Phosphorylation by STK4/MST1 alters its binding affinity to TNNC1 (cardiac Tn-C) and TNNT2 (cardiac Tn-T). Phosphorylated at Ser-43 and Ser-45 by PRKCE; phosphorylation increases myocardium contractile dysfunction.

In terms of biological role, troponin I is the inhibitory subunit of troponin, the thin filament regulatory complex which confers calcium-sensitivity to striated muscle actomyosin ATPase activity. In Rattus norvegicus (Rat), this protein is Troponin I, cardiac muscle (Tnni3).